The primary structure comprises 398 residues: Succinate--CoA ligase [ADP-forming] subunit beta (398 aa).

One can recognise an ATP-grasp domain in the interval 9–253; sequence KEILNSFGVR…VREENATEVE (245 aa). Residues Lys-50, 57–59, Val-106, and Glu-116 each bind ATP; that span reads GRG. The Mg(2+) site is built by Asn-208 and Asp-222. Residues Asn-273 and 330 to 332 each bind substrate; that span reads GIV.

Belongs to the succinate/malate CoA ligase beta subunit family. In terms of assembly, heterotetramer of two alpha and two beta subunits. It depends on Mg(2+) as a cofactor.

It catalyses the reaction succinate + ATP + CoA = succinyl-CoA + ADP + phosphate. It carries out the reaction GTP + succinate + CoA = succinyl-CoA + GDP + phosphate. It participates in carbohydrate metabolism; tricarboxylic acid cycle; succinate from succinyl-CoA (ligase route): step 1/1. In terms of biological role, succinyl-CoA synthetase functions in the citric acid cycle (TCA), coupling the hydrolysis of succinyl-CoA to the synthesis of either ATP or GTP and thus represents the only step of substrate-level phosphorylation in the TCA. The beta subunit provides nucleotide specificity of the enzyme and binds the substrate succinate, while the binding sites for coenzyme A and phosphate are found in the alpha subunit. The polypeptide is Succinate--CoA ligase [ADP-forming] subunit beta (Christiangramia forsetii (strain DSM 17595 / CGMCC 1.15422 / KT0803) (Gramella forsetii)).